Consider the following 766-residue polypeptide: Alpha-onocerin synthase LCD (766 aa).

7 PFTB repeats span residues 101–143, 151–192, 456–507, 517–558, 594–634, 643–684, and 705–752; these read LCRA…GALD, QREI…RLMG, QESY…STTD, IHEC…PGYK, IQEG…LASG, IQRA…HVVH, and LHRA…WALG. Aspartate 488 acts as the Proton donor in catalysis.

The protein belongs to the terpene cyclase/mutase family.

The enzyme catalyses pre-alpha-onocerin = alpha-onocerin. The protein operates within secondary metabolite biosynthesis; terpenoid biosynthesis. Oxidosqualene cyclase involved in the biosynthesis of alpha-onocerin, a triterpenoid characterized by a symmetrical structure due to cyclizations at both termini of dioxidosqualene that inhibits acetylcholinesterase. Catalyzes the second half of the cyclization, exclusively from pre-alpha-onocerin. The chain is Alpha-onocerin synthase LCD from Lycopodium clavatum (Stag's-horn clubmoss).